The sequence spans 1571 residues: Paternally-expressed gene 3 protein (1571 aa).

Disordered regions lie at residues 1 to 120 (MYHH…NPIQ) and 137 to 241 (AEDD…QERG). Composition is skewed to basic and acidic residues over residues 35–56 (GSERDLERRGRSRDVEPRDRWP), 80–99 (FGLDRDDDRRSMDYESRSQD), 169–186 (PEAKKPSHRRGICEDESS), 193–215 (KFIKDVARNPKSGRARELNERPP), and 223–241 (DNWKDSSSSRRESVIQERG). A 10 X 5 AA repeat of P-H-X-X-E region spans residues 199 to 265 (ARNPKSGRAR…DLASRSRALE (67 aa)). Residues 199-265 (ARNPKSGRAR…DLASRSRALE (67 aa)) form a 3 X 5 AA repeat of P-H-D-D-K region. C2H2-type zinc fingers lie at residues 325 to 347 (YVCDECGRQFSVISEFVEHQIMH), 378 to 400 (FECKECGETFSRSAALAEHRQIH), 436 to 458 (YECKVCKETFLHSSALIEHQKIH), and 520 to 542 (YECKVCGESFLHLSSLREHQKIH). Residues 456 to 495 (KIHGRGNSDDRDNERERERDRLRARAREQRERERERERER) form a disordered region. Disordered regions lie at residues 585–649 (ALMG…LKFP), 672–713 (EAQK…TYEG), and 764–820 (REDA…AKKK). The span at 592–614 (SSEHQKNRSRRNFFEGRGFEKPF) shows a compositional bias: basic and acidic residues. Composition is skewed to polar residues over residues 770–781 (GSSSSNYHTPNV) and 799–808 (DVTFSVPSSS). The span at 809 to 820 (VREHQKARAKKK) shows a compositional bias: basic and acidic residues. The segment at 850 to 872 (FECQECGEAFARRSELIEHQKIH) adopts a C2H2-type 5 zinc-finger fold. The segment at 937-1070 (FNAEEPHDKE…ESHGQEKVED (134 aa)) is disordered. A compositionally biased stretch (basic and acidic residues) spans 940 to 1070 (EEPHDKETHG…ESHGQEKVED (131 aa)). Tandem repeats lie at residues 942-946 (PHDKE), 967-971 (PHGDE), 987-991 (PHDDK), 992-996 (PHGQE), 997-1001 (PHDDK), 1002-1006 (PHGQE), 1007-1011 (PHDDK), 1012-1016 (PHGQE), 1017-1021 (PHGDE), 1022-1026 (PHGQE), 1027-1031 (PHGDE), 1032-1036 (PHDKE), and 1047-1051 (PHSEE). 4 consecutive C2H2-type zinc fingers follow at residues 1091 to 1113 (YECQDCGLGFTDLNDLTSHQDTH), 1147 to 1169 (YECPKCGESFIHSSLLFEHQRVH), 1209 to 1231 (IRCRQCGQGFIHSSALNEHMRQH), and 1266 to 1289 (FECTICGECFFTAKQLGDHHTKVH). Residues 1317–1339 (YECKDCGQSFLDDTVIAERMVFH) form a C2H2-type 10; degenerate zinc finger. The disordered stretch occupies residues 1373–1487 (NAEAAEPEVE…DQEIEVEEPY (115 aa)). Composition is skewed to acidic residues over residues 1377–1397 (AEPEVEAAEPEVEAAEPEVEA), 1405–1418 (EGPDGEAAEPDGEA), and 1431–1485 (DADE…EVEE). C2H2-type zinc fingers lie at residues 1488 to 1510 (YNCHECAETFASSSAFGEHLKSH) and 1547 to 1569 (FKCDVCGQLFNDRLSLARHQNSH).

This sequence belongs to the krueppel C2H2-type zinc-finger protein family. Homodimer. Interacts with SIAH1A and SIAH2. Interacts with TRAF2. In terms of tissue distribution, brain, glial cells, neurons, skeletal muscle, uterus and placenta. In the placenta it is found in all trophoblast cells.

The protein localises to the nucleus. The protein resides in the cytoplasm. In terms of biological role, induces apoptosis in cooperation with SIAH1A. Acts as a mediator between p53/TP53 and BAX in a neuronal death pathway that is activated by DNA damage. Acts synergistically with TRAF2 and inhibits TNF induced apoptosis through activation of NF-kappa-B. Plays a role in regulating maternal behavior and offspring growth. The chain is Paternally-expressed gene 3 protein (Peg3) from Mus musculus (Mouse).